The following is a 67-amino-acid chain: Cold shock protein (67 aa).

The region spanning 4-64 (GTVKWFNAEK…GAKGPQATGV (61 aa)) is the CSD domain.

It localises to the cytoplasm. The chain is Cold shock protein (csp) from Arthrobacter globiformis.